The following is a 420-amino-acid chain: Transmembrane protease serine 11B-like protein (420 aa).

The Cytoplasmic segment spans residues 1–19 (MTVSKLRPVIASRKSFPPW). Residues 20 to 40 (MIILGVLGVLAILGLIIGLLV) form a helical; Signal-anchor for type II membrane protein membrane-spanning segment. Residues 41–420 (HFLAVENKIY…RDWIASKTGI (380 aa)) are Extracellular-facing. The 118-residue stretch at 48-165 (KIYYYQGSFK…GSLKLTEITK (118 aa)) folds into the SEA domain. N-linked (GlcNAc...) asparagine glycosylation is found at N111 and N146. Positions 189-419 (ITGGSTAQKG…YRDWIASKTG (231 aa)) constitute a Peptidase S1 domain. C214 and C230 form a disulfide bridge. H229 functions as the Charge relay system in the catalytic mechanism. Residue N239 is glycosylated (N-linked (GlcNAc...) asparagine). D274 serves as the catalytic Charge relay system. 2 disulfide bridges follow: C339–C355 and C366–C395. S370 functions as the Charge relay system in the catalytic mechanism.

Belongs to the peptidase S1 family.

The protein resides in the membrane. Its subcellular location is the cell membrane. Its activity is regulated as follows. Inhibited by aprotinin, leupeptin, benzamidine, SERPINA1, SPINT1 and SPINT2. Serine protease. The polypeptide is Transmembrane protease serine 11B-like protein (Tmprss11bnl) (Rattus norvegicus (Rat)).